A 239-amino-acid chain; its full sequence is tRNA1(Val) (adenine(37)-N6)-methyltransferase (239 aa).

The protein belongs to the methyltransferase superfamily. tRNA (adenine-N(6)-)-methyltransferase family.

The protein localises to the cytoplasm. The catalysed reaction is adenosine(37) in tRNA1(Val) + S-adenosyl-L-methionine = N(6)-methyladenosine(37) in tRNA1(Val) + S-adenosyl-L-homocysteine + H(+). In terms of biological role, specifically methylates the adenine in position 37 of tRNA(1)(Val) (anticodon cmo5UAC). The chain is tRNA1(Val) (adenine(37)-N6)-methyltransferase from Trichodesmium erythraeum (strain IMS101).